We begin with the raw amino-acid sequence, 433 residues long: UPF0597 protein DNO_0106 (433 aa).

The protein belongs to the UPF0597 family.

The protein is UPF0597 protein DNO_0106 of Dichelobacter nodosus (strain VCS1703A).